Reading from the N-terminus, the 162-residue chain is Phenazine biosynthesis protein PhzA2 (162 aa).

This sequence belongs to the PhzA/PhzB family.

It functions in the pathway antibiotic biosynthesis; phenazine biosynthesis. Its function is as follows. Involved in the biosynthesis of the antibiotic phenazine, a nitrogen-containing heterocyclic molecule having important roles in virulence, competition and biological control. PhzA2 (operon phzA2B2C2E2F2G2) has a role in the biosynthesis of the phenazine during both planktonic growth and biofilm development, and in host infection during biofilm development. This Pseudomonas aeruginosa (strain ATCC 15692 / DSM 22644 / CIP 104116 / JCM 14847 / LMG 12228 / 1C / PRS 101 / PAO1) protein is Phenazine biosynthesis protein PhzA2.